Reading from the N-terminus, the 526-residue chain is MQPDPQPHGRGREKAAGAGPRLPPPVTAPSVGRPASVLPHKTANVRDHYRIGKKLGQGQFGTTYLCVGKPDGGEYACKSIPKRKLLCREDYEDVWREIQIMHHLSEHPNVVRIRGAYEDALFVHIVMELCAGGELFDRIVAKGHYTERAAALLIRTIVGVVEGCHSLGVMHRDLKPENFLFASTAEDAPLKATDFGLSVFYKPGDKFSDVVGSPYYVAPEVLQKIYGPEADVWSAGVILYILLCGVPPFWAETESGIFRQILRGKLDLESDPWPSISDSAKDLVRNMLIRDPTKRFTAHEVLCHPWIVDDAVAPDKPIDSAVLSRLKHFSAMNKLKKMALRVIAESLSEEEIGGLKELFKMIDTDNSGTITYDELKNGLKRVGSDLMEPEIQALMDAADIDNSGTIDYGEFLAATLHMNKLEREENLVSAFTFFDKDGSGFITIDELSQACEQFGLSDVHLEDMIKDVDQNNDGQIDYSEFAAMMRKGNAGGANAGGVTSTGGTGRRTMRNSLRVNLGDILKPNEN.

Residues 1–37 form a disordered region; it reads MQPDPQPHGRGREKAAGAGPRLPPPVTAPSVGRPASV. The region spanning 49–307 is the Protein kinase domain; the sequence is YRIGKKLGQG…AHEVLCHPWI (259 aa). ATP contacts are provided by residues 55–63 and K78; that span reads LGQGQFGTT. The active-site Proton acceptor is D173. Residues 313-343 are autoinhibitory domain; sequence APDKPIDSAVLSRLKHFSAMNKLKKMALRVI. 4 EF-hand domains span residues 350-385, 386-421, 422-457, and 460-491; these read EEIGGLKELFKMIDTDNSGTITYDELKNGLKRVGSD, LMEPEIQALMDAADIDNSGTIDYGEFLAATLHMNKL, EREENLVSAFTFFDKDGSGFITIDELSQACEQFGLS, and HLEDMIKDVDQNNDGQIDYSEFAAMMRKGNAG. Ca(2+) is bound by residues D363, D365, S367, T369, E374, D399, D401, S403, T405, E410, D435, D437, S439, E446, D469, N471, D473, Q475, and E480.

This sequence belongs to the protein kinase superfamily. Ser/Thr protein kinase family. CDPK subfamily.

The enzyme catalyses L-seryl-[protein] + ATP = O-phospho-L-seryl-[protein] + ADP + H(+). It carries out the reaction L-threonyl-[protein] + ATP = O-phospho-L-threonyl-[protein] + ADP + H(+). Activated by calcium. Autophosphorylation may play an important role in the regulation of the kinase activity. In terms of biological role, may play a role in signal transduction pathways that involve calcium as a second messenger. The chain is Calcium-dependent protein kinase 28 from Oryza sativa subsp. japonica (Rice).